A 305-amino-acid chain; its full sequence is Glycine--tRNA ligase alpha subunit (305 aa).

The protein belongs to the class-II aminoacyl-tRNA synthetase family. Tetramer of two alpha and two beta subunits.

It localises to the cytoplasm. The enzyme catalyses tRNA(Gly) + glycine + ATP = glycyl-tRNA(Gly) + AMP + diphosphate. This Streptococcus thermophilus (strain CNRZ 1066) protein is Glycine--tRNA ligase alpha subunit.